The following is a 269-amino-acid chain: Tryptophan synthase alpha chain (269 aa).

Catalysis depends on proton acceptor residues Glu-49 and Asp-60.

Belongs to the TrpA family. Tetramer of two alpha and two beta chains.

The catalysed reaction is (1S,2R)-1-C-(indol-3-yl)glycerol 3-phosphate + L-serine = D-glyceraldehyde 3-phosphate + L-tryptophan + H2O. It participates in amino-acid biosynthesis; L-tryptophan biosynthesis; L-tryptophan from chorismate: step 5/5. The alpha subunit is responsible for the aldol cleavage of indoleglycerol phosphate to indole and glyceraldehyde 3-phosphate. This is Tryptophan synthase alpha chain from Actinobacillus pleuropneumoniae serotype 3 (strain JL03).